The sequence spans 155 residues: Transcriptional repressor NrdR (155 aa).

Residues 1–24 (MRCPYCGHEDSQVKDSRPTEDGAA) are disordered. A zinc finger spans residues 3–34 (CPYCGHEDSQVKDSRPTEDGAAIRRRRQCEDC). Basic and acidic residues predominate over residues 7-24 (GHEDSQVKDSRPTEDGAA). Residues 49–139 (VVVIKAGGTR…VYRDFTEARD (91 aa)) form the ATP-cone domain.

This sequence belongs to the NrdR family. Zn(2+) serves as cofactor.

Functionally, negatively regulates transcription of bacterial ribonucleotide reductase nrd genes and operons by binding to NrdR-boxes. This is Transcriptional repressor NrdR from Sphingopyxis alaskensis (strain DSM 13593 / LMG 18877 / RB2256) (Sphingomonas alaskensis).